The primary structure comprises 68 residues: Large ribosomal subunit protein uL29 (68 aa).

The protein belongs to the universal ribosomal protein uL29 family.

The chain is Large ribosomal subunit protein uL29 from Maricaulis maris (strain MCS10) (Caulobacter maris).